A 182-amino-acid chain; its full sequence is UPF0397 protein llmg_0343 (182 aa).

A run of 5 helical transmembrane segments spans residues 8-28 (IVVATGIGAALFVIIGWLINI), 42-62 (AVLALFSALFGPLAGFLIGFI), 74-94 (APWWTWVLGSGLMGLFLGFGV), 114-134 (IVQFLANVVVWGLIAPIGDIL), and 146-166 (QGVVAGLVNALTIAVAGTLLL).

It belongs to the UPF0397 family.

It localises to the cell membrane. This Lactococcus lactis subsp. cremoris (strain MG1363) protein is UPF0397 protein llmg_0343.